Consider the following 127-residue polypeptide: Fumarate reductase subunit C (127 aa).

Transmembrane regions (helical) follow at residues 30-50 (ATILPLIFFTICLLVGLGSLV), 67-87 (IVVALNIVALAGSLFHAQTFF), and 107-127 (VVVLAQWAAVAAITLLVLVIV).

The protein belongs to the FrdC family. In terms of assembly, part of an enzyme complex containing four subunits: a flavoprotein (FrdA), an iron-sulfur protein (FrdB), and two hydrophobic anchor proteins (FrdC and FrdD).

Its subcellular location is the cell inner membrane. Anchors the catalytic components of the fumarate reductase complex to the cell membrane, binds quinones. This is Fumarate reductase subunit C from Aliivibrio salmonicida (strain LFI1238) (Vibrio salmonicida (strain LFI1238)).